The primary structure comprises 263 residues: 4-hydroxy-2-oxo-heptane-1,7-dioate aldolase (263 aa).

His-45 acts as the Proton acceptor in catalysis. Substrate is bound at residue Gln-147. An a divalent metal cation-binding site is contributed by Glu-149. Substrate is bound by residues Ala-174 and Asp-175. Asp-175 contacts a divalent metal cation.

Belongs to the HpcH/HpaI aldolase family. Homohexamer; trimer of dimers. The cofactor is a divalent metal cation.

It carries out the reaction 4-hydroxy-2-oxoheptanedioate = succinate semialdehyde + pyruvate. The protein operates within aromatic compound metabolism; 4-hydroxyphenylacetate degradation; pyruvate and succinate semialdehyde from 4-hydroxyphenylacetate: step 7/7. In terms of biological role, catalyzes the reversible retro-aldol cleavage of 4-hydroxy-2-ketoheptane-1,7-dioate (HKHD) to pyruvate and succinic semialdehyde. The chain is 4-hydroxy-2-oxo-heptane-1,7-dioate aldolase from Salmonella enteritidis PT4 (strain P125109).